A 215-amino-acid polypeptide reads, in one-letter code: Thymidylate kinase (215 aa).

Residue 7–14 (GLDGSGKT) participates in ATP binding.

Belongs to the thymidylate kinase family.

It carries out the reaction dTMP + ATP = dTDP + ADP. Functionally, phosphorylation of dTMP to form dTDP in both de novo and salvage pathways of dTTP synthesis. The sequence is that of Thymidylate kinase from Mycoplasmopsis agalactiae (strain NCTC 10123 / CIP 59.7 / PG2) (Mycoplasma agalactiae).